A 284-amino-acid polypeptide reads, in one-letter code: Sulfotransferase 2A6 (284 aa).

3'-phosphoadenylyl sulfate is bound at residue 43–48; it reads KSGTNW. The active-site Proton acceptor is His-98. 3'-phosphoadenylyl sulfate-binding positions include Arg-120, Ser-128, Tyr-183, 217–222, and 246–248; these read SSFQVM and RNG.

Belongs to the sulfotransferase 1 family. In terms of assembly, oligomer. In terms of tissue distribution, liver, exhibiting a sex-dependent spatial localization in the lobule of the liver.

The protein resides in the cytoplasm. Its subcellular location is the cytosol. It carries out the reaction an alcohol + 3'-phosphoadenylyl sulfate = an alkyl sulfate + adenosine 3',5'-bisphosphate + H(+). The enzyme catalyses glycolithocholate + 3'-phosphoadenylyl sulfate = sulfoglycolithocholate + adenosine 3',5'-bisphosphate + H(+). The catalysed reaction is taurolithocholate + 3'-phosphoadenylyl sulfate = taurolithocholate 3-sulfate + adenosine 3',5'-bisphosphate + H(+). It catalyses the reaction 3beta-hydroxyandrost-5-en-17-one + 3'-phosphoadenylyl sulfate = dehydroepiandrosterone 3-sulfate + adenosine 3',5'-bisphosphate + H(+). It carries out the reaction 3beta-hydroxy-5-cholenate + 3'-phosphoadenylyl sulfate = 3beta-sulfo-5-cholenate + adenosine 3',5'-bisphosphate + H(+). The enzyme catalyses deoxycholate + 3'-phosphoadenylyl sulfate = 3alpha-sulfodeoxycholate + adenosine 3',5'-bisphosphate + H(+). The catalysed reaction is glycodeoxycholate + 3'-phosphoadenylyl sulfate = 3alpha-sulfoglycodeoxycholate + adenosine 3',5'-bisphosphate + H(+). It catalyses the reaction taurodeoxycholate + 3'-phosphoadenylyl sulfate = 3alpha-sulfotaurodeoxycholate + adenosine 3',5'-bisphosphate + H(+). Its function is as follows. Sulfotransferase that utilizes 3'-phospho-5'-adenylyl sulfate (PAPS) as sulfonate donor to catalyze the sulfonation of the hydroxyl group of hydroxysteroids and bile acids. Prefered substrates are dehydroepiandrosterone (DHEA, also known as 3beta-hydroxyandrost-5-en-17-one) and 3beta-hydroxy-5-cholenoate, but can also catalyze deoxycholate and its conjugates, and lithocholate conjugates, in vitro. The chain is Sulfotransferase 2A6 from Rattus norvegicus (Rat).